A 407-amino-acid chain; its full sequence is Shaggy-related protein kinase GSK1 (407 aa).

A compositionally biased stretch (pro residues) spans 1–19; the sequence is MEAPPGPEPMELDAPPPPA. The tract at residues 1–21 is disordered; that stretch reads MEAPPGPEPMELDAPPPPAAV. Residues 68 to 352 form the Protein kinase domain; sequence YMAERVVGTG…ALDACAHSFF (285 aa). ATP contacts are provided by residues 74–82 and lysine 97; that span reads VGTGSFGIV. Aspartate 193 (proton acceptor) is an active-site residue.

It belongs to the protein kinase superfamily. CMGC Ser/Thr protein kinase family. GSK-3 subfamily. Interacts with LIC. As to expression, highly expressed in the entire young panicles, spikelets, awns, vascular bundles of palea and lemma, stigma and rachilla. Expressed in root tips, root hairs, lamina joint in the collar region, vascular bundles of coleoptiles.

The enzyme catalyses L-seryl-[protein] + ATP = O-phospho-L-seryl-[protein] + ADP + H(+). It carries out the reaction L-threonyl-[protein] + ATP = O-phospho-L-threonyl-[protein] + ADP + H(+). Probable serine-threonine kinase that may act as a negative regulator of brassinosteroid (BR) signaling during flower development. May have physiological roles in stress signal-transduction pathways. Phosphorylates LIC in response to BR perception. This chain is Shaggy-related protein kinase GSK1, found in Oryza sativa subsp. japonica (Rice).